We begin with the raw amino-acid sequence, 474 residues long: MTTPSTSTAPKTLYQKVWDAHVVATPEGEAPIIYVDRHLVHEVTSPQAFSGLKVAGRKLRAPEKTFATMDHNTSTRSASLDALSPMARTQVETLAQNCKDFGVRLYDIHHPNQGIVHVMGPELGITLPGTVIVCGDSHTATHGAFGALAFGIGTSEVEHVLATQTLRQLKAKTMKIEVRGQVTDGVTAKDIVLAIIGKIGMDGGTGYVVEFCGEAIEALSMEGRMTVCNMAIEMGAKAGMVAPDQTTFDYLEGREFAPKGEDWAEAVAAWKALKTDVGAEFDASVVLDAADIAPQLTWGTNPGQVVAIDAPVPNPADEANPTIRASMEKALDYIGLTAGTPMTDVAINKVFIGSCTNSRIEDLRSAAKQAKGRKVASGVTAIVVPGSGQVKAQAEAEGLDKIFIEAGFEWRLPGCSMCLAMNDDRLEAGDRCASTSNRNFEGRQGRGSRTHLVSPAMAAAAAIAGHFVDIRKPY.

Cys-355, Cys-415, and Cys-418 together coordinate [4Fe-4S] cluster.

Belongs to the aconitase/IPM isomerase family. LeuC type 1 subfamily. Heterodimer of LeuC and LeuD. Requires [4Fe-4S] cluster as cofactor.

The enzyme catalyses (2R,3S)-3-isopropylmalate = (2S)-2-isopropylmalate. It participates in amino-acid biosynthesis; L-leucine biosynthesis; L-leucine from 3-methyl-2-oxobutanoate: step 2/4. In terms of biological role, catalyzes the isomerization between 2-isopropylmalate and 3-isopropylmalate, via the formation of 2-isopropylmaleate. The polypeptide is 3-isopropylmalate dehydratase large subunit (Shewanella sp. (strain MR-4)).